The sequence spans 1203 residues: Zinc finger and BTB domain-containing protein 38 (1203 aa).

A BTB domain is found at 33-100 (CDVTIIVEDT…IYSSTVVVRR (68 aa)). Lys-43 is covalently cross-linked (Glycyl lysine isopeptide (Lys-Gly) (interchain with G-Cter in SUMO2)). Phosphoserine is present on Ser-130. Glycyl lysine isopeptide (Lys-Gly) (interchain with G-Cter in SUMO2) cross-links involve residues Lys-145, Lys-148, Lys-151, and Lys-260. Positions 230-334 (EAYRSQPLRE…PSETPGPPAA (105 aa)) are disordered. Polar residues predominate over residues 269-280 (TQTQDSDSTTEN). The segment at 299-522 (PAPILSHSEP…RRYQCIFCLE (224 aa)) is interaction with CBFA2T3. The span at 313–322 (GDVHFPREDE) shows a compositional bias: basic and acidic residues. Residues 341 to 363 (YNCSCCSKSFDSSTLLGAHMQLH) form a C2H2-type 1 zinc finger. A C2H2-type 2; degenerate zinc finger spans residues 370–394 (FVCKYCNKQFTTLNRLDRHEQICMR). 3 consecutive C2H2-type zinc fingers follow at residues 459 to 481 (YSCV…ANVH), 487 to 509 (YPCH…EIWH), and 515 to 538 (YQCI…KSFH). Residues Lys-549 and Lys-556 each participate in a glycyl lysine isopeptide (Lys-Gly) (interchain with G-Cter in SUMO2) cross-link. Polar residues-rich tracts occupy residues 581–598 (RNSS…NESP), 607–628 (LPSS…TSSP), 635–644 (PSWQGTPTSA), and 731–741 (SNHQSPSQPVA). 2 disordered regions span residues 581–644 (RNSS…PTSA) and 731–776 (SNHQ…VPCN). The segment covering 747–757 (KDSKPEADKAS) has biased composition (basic and acidic residues). Glycyl lysine isopeptide (Lys-Gly) (interchain with G-Cter in SUMO2) cross-links involve residues Lys-750, Lys-755, Lys-796, Lys-806, Lys-813, Lys-834, Lys-842, and Lys-849. 2 disordered regions span residues 857–882 (KPKY…SPLG) and 895–914 (FDEV…YYNY). Over residues 866-877 (TLPRESDPETRG) the composition is skewed to basic and acidic residues. Glycyl lysine isopeptide (Lys-Gly) (interchain with G-Cter in SUMO2) cross-links involve residues Lys-915, Lys-971, Lys-976, Lys-984, Lys-988, Lys-998, Lys-1024, and Lys-1033. C2H2-type zinc fingers lie at residues 1017–1039 (YICE…MRCH), 1045–1067 (YQCK…ERIH), 1073–1095 (FICQ…ERIH), 1101–1123 (YHCQ…ERRH), and 1132–1154 (FACF…QKKH). Glycyl lysine isopeptide (Lys-Gly) (interchain with G-Cter in SUMO2) cross-links involve residues Lys-1116, Lys-1139, Lys-1142, Lys-1157, and Lys-1190. A disordered region spans residues 1172 to 1203 (NSDLLESQPCTDSEDSDQKDDIKKPLLKMSFE).

In terms of assembly, interacts with CBFA2T3, ZBTB4 and RBBP6. Ubiquitinated by RBBP6; leading to its degradation by the proteasome. As to expression, widely expressed throughout the adult brain where it is found mainly in neurons. Also expressed in the adrenal medulla. Not detected in non-neural tissues including heart, spleen, liver and muscle. In the embryo, expressed in the developing brain and spinal cord but not in the migratory neural crest. Also expressed in the limbs, transiently in somites, and in the embryonic liver. In the embryonic neural tube, expression is restricted to late postmitotic neurons.

The protein resides in the nucleus. It is found in the chromosome. Functionally, transcriptional regulator with bimodal DNA-binding specificity. Binds with a higher affinity to methylated CpG dinucleotides in the consensus sequence 5'-CGCG-3' but can also bind to E-box elements (5'-CACGTG-3'). Can also bind specifically to a single methyl-CpG pair. Represses transcription in a methyl-CpG-dependent manner. Plays an important role in regulating DNA-replication and common fragile sites (CFS) stability in a RBBP6- and MCM10-dependent manner; represses expression of MCM10 which plays an important role in DNA-replication. Acts as a transcriptional activator. May be involved in the differentiation and/or survival of late postmitotic neurons. This chain is Zinc finger and BTB domain-containing protein 38, found in Rattus norvegicus (Rat).